The sequence spans 281 residues: Ras-related protein Rab-40C (281 aa).

Residues S23, G26, K27, and S46 each contribute to the GTP site. The switch-I stretch occupies residues S41–I49. Residues S46 and D69 each coordinate Mg(2+). G72, N126, and R127 together coordinate GTP. Positions G72 to Q88 are switch-II. An SOCS box domain is found at L175 to A228. The interval S245 to S281 is disordered. The segment covering P270–S281 has biased composition (polar residues). Residue C273 is the site of S-palmitoyl cysteine attachment. Residue C278 is the site of S-geranylgeranyl cysteine attachment.

The protein belongs to the small GTPase superfamily. Rab family. As to quaternary structure, component of the cullin-5-RING E3 ubiquitin-protein ligase complex (ECS(RAB40C) complex) composed of CUL5, Elongin BC (ELOB and ELOC), RNF7/RBX2 and RAB40C. Interacts with protein phosphatase 6 (PP6) complex components ANKRD28, ANKRD52, PPP6C, PP6R1 and PP6R2; the interaction leads to ANKRD28 ubiquitination and decreased PP6 activity. Interacts with DAB2IP; DAB2IP acts as a GAP for RAB40C. Requires Mg(2+) as cofactor.

It localises to the cell membrane. The protein resides in the cytoplasm. It is found in the cytosol. The protein localises to the golgi apparatus membrane. It carries out the reaction GTP + H2O = GDP + phosphate + H(+). Its pathway is protein modification; protein ubiquitination. Its activity is regulated as follows. Regulated by guanine nucleotide exchange factors (GEFs) which promote the exchange of bound GDP for free GTP. Regulated by GTPase activating proteins (GAPs) including DAB2IP, which increase the GTP hydrolysis activity. Inhibited by GDP dissociation inhibitors (GDIs). In terms of biological role, RAB40C small GTPase acts as substrate-recognition component of the ECS(RAB40C) E3 ubiquitin ligase complex which mediates the ubiquitination and subsequent proteasomal degradation of target proteins. The Rab40 subfamily belongs to the Rab family that are key regulators of intracellular membrane trafficking, from the formation of transport vesicles to their fusion with membranes. Rabs cycle between an inactive GDP-bound form and an active GTP-bound form that is able to recruit to membranes different sets of downstream effectors directly responsible for vesicle formation, movement, tethering and fusion. As part of the ECS(RAB40C) complex, mediates ANKRD28 ubiquitination and degradation, thereby inhibiting protein phosphatase 6 (PP6) complex activity and focal adhesion assembly during cell migration. Also negatively regulate lipid droplets accumulation in a GTP-dependent manner. This Mus musculus (Mouse) protein is Ras-related protein Rab-40C.